We begin with the raw amino-acid sequence, 301 residues long: MAKEIVGGFKFDQRHGKERVRVARVWKTKKGGYFIVEWRVGISLLSDCVNSYVRDDNSDIVATDTMKNTVYAKAKECSEILSVEDFAILLAKHFISFYKQVTAAIVNIVEKPWERVSVDGQPHEHGFKLGSERHTAEAIVQKSGALQLTSGIEGLSLLKTTKSGFEGFIRDKYTALPETHERMLATEVTALWRYSYESLYSIPQKPLYFTDKYLEVKKVLADTFFGPPNVGVYSPSVQNTLYLMAKAHSSIQLKMPNIHFLPVNISNKDGPIVKFDDDVYFPTDEPHGSIQASLSRLWSKL.

Catalysis depends on charge relay system residues Lys-17 and Thr-63. Urate contacts are provided by Thr-63, Asp-64, Phe-165, Arg-182, Val-237, Gln-238, and Asn-257. His-259 serves as the catalytic Charge relay system. The short motif at 299–301 (SKL) is the Microbody targeting signal element.

This sequence belongs to the uricase family.

It is found in the peroxisome. The enzyme catalyses urate + O2 + H2O = 5-hydroxyisourate + H2O2. Its pathway is purine metabolism; urate degradation; (S)-allantoin from urate: step 1/3. Catalyzes the oxidation of uric acid to 5-hydroxyisourate, which is further processed to form (S)-allantoin. The sequence is that of Uricase-2 isozyme 2 from Canavalia lineata (Beach bean).